Consider the following 742-residue polypeptide: Zinc finger MYND domain-containing protein 15 (742 aa).

A disordered region spans residues 109-199 (LEDGEEGEEE…QKRKGQRSEA (91 aa)). Residues 110–127 (EDGEEGEEEEEEDEEEEK) are compositionally biased toward acidic residues. A compositionally biased stretch (polar residues) spans 151–161 (SRESPQETNPP). The span at 166 to 189 (EAAREAGGGKDGCREDRVENETRP) shows a compositional bias: basic and acidic residues. Zn(2+) contacts are provided by Cys313, Cys316, Cys328, Cys331, Cys337, Cys341, His355, and Cys359. An MYND-type zinc finger spans residues 313–359 (CHVCHRHSFEAKLTPCPQCSAVLYCGEACLRADWQRCPDDVSHRFWC). Disordered regions lie at residues 565–590 (EVSVRPGSGISARPSSGTKEKGGRRD) and 701–742 (QGSG…RRRK). Residues 708–724 (APGPPPPSPTPSAPPAP) show a composition bias toward pro residues. A compositionally biased stretch (basic residues) spans 725–742 (TRRRRGEKKPGRGARRRK).

In terms of assembly, interacts with HDAC1, HDAC3, HDAC6 and, to a lesser extent, with HDAC7.

The protein localises to the nucleus. It is found in the cytoplasm. In terms of biological role, acts as a transcriptional repressor through interaction with histone deacetylases (HDACs). May be important for spermiogenesis. The polypeptide is Zinc finger MYND domain-containing protein 15 (ZMYND15) (Homo sapiens (Human)).